A 177-amino-acid polypeptide reads, in one-letter code: Protein TERMINAL FLOWER 1 (177 aa).

This sequence belongs to the phosphatidylethanolamine-binding protein family. In terms of tissue distribution, expressed below the apical dome of inflorescence and coflorescence meristems, and in inflorescence stem.

Its subcellular location is the cytoplasm. Controls inflorescence meristem identity and is required for maintenance of an indeterminate inflorescence. Prevents the expression of 'APETALA1' and 'LEAFY'. Also plays a role in the regulation of the time of flowering in the long-day flowering pathway. May form complexes with phosphorylated ligands by interfering with kinases and their effectors. The sequence is that of Protein TERMINAL FLOWER 1 (TFL1) from Arabidopsis thaliana (Mouse-ear cress).